Here is a 409-residue protein sequence, read N- to C-terminus: Ligand-gated cation channel ZACN (409 aa).

The N-terminal stretch at 1–18 is a signal peptide; sequence MAPRLLLLLLAFLRLGTT. Residues 19 to 233 are Extracellular-facing; the sequence is GPLVQGRGFR…LRLQNTALKA (215 aa). N-linked (GlcNAc...) asparagine glycosylation is found at N55 and N99. A disulfide bond links C157 and C171. A helical membrane pass occupies residues 234-254; the sequence is IIALLVPGEALLLADMCGGLL. The Cytoplasmic portion of the chain corresponds to 255 to 265; it reads PLRATERIAYK. Residues 266 to 286 form a helical membrane-spanning segment; the sequence is VTLLLGYLVFHSSLVQALPSS. Residues 287–296 are Extracellular-facing; it reads SSCNPLLIYY. A helical membrane pass occupies residues 297–317; that stretch reads FTVLLLLLFISTMETVLLAAL. Residues 318 to 365 lie on the Cytoplasmic side of the membrane; it reads QARGHLSARSSPIPTPRGEQQDHGDLGPHPEEAPGVKESRSWAEAADH. The segment at 325–354 is disordered; it reads ARSSPIPTPRGEQQDHGDLGPHPEEAPGVK. The span at 336–354 shows a compositional bias: basic and acidic residues; the sequence is EQQDHGDLGPHPEEAPGVK. A helical membrane pass occupies residues 366–386; that stretch reads IFFLVYVVGVVCSQFFFIGFW. Over 387–409 the chain is Extracellular; it reads MWATCKSDPAPGEAIPHGGQPRL.

The protein belongs to the ligand-gated ion channel (TC 1.A.9) family. Post-translationally, glycosylated.

The protein localises to the cell membrane. It carries out the reaction Na(+)(in) = Na(+)(out). The enzyme catalyses K(+)(in) = K(+)(out). Functionally, ligand-gated cation channel that allows the movement of sodium and potassium monoatomic cations across cell membranes when activated by zinc (Zn2+), copper (Cu2+), and changes in pH. Could also transport cesium. This Canis lupus familiaris (Dog) protein is Ligand-gated cation channel ZACN.